The primary structure comprises 814 residues: Pre-rRNA-processing protein TSR1 homolog (814 aa).

A disordered region spans residues 1–67 (MADHAFHRPG…NQMNQLRKNK (67 aa)). The segment covering 16 to 27 (NKAHKTGRHRSK) has biased composition (basic residues). A Bms1-type G domain is found at 84–249 (APFLVCLLPM…MRRIGGQKKR (166 aa)). Disordered regions lie at residues 316–357 (PYKL…DAEQ) and 392–448 (WIPD…EEFQ). Basic and acidic residues predominate over residues 317–340 (YKLDKSRDGENSEVRLLDRSDPSK). Residues 395–426 (DVEEVEDPDGKDDDDMSEDDDDDKEDDNEDFM) show a composition bias toward acidic residues. Residues 431–442 (KSFEDEYEKRDS) show a composition bias toward basic and acidic residues. At Thr-444 the chain carries Phosphothreonine.

It belongs to the TRAFAC class translation factor GTPase superfamily. Bms1-like GTPase family. TSR1 subfamily.

The protein localises to the nucleus. Its subcellular location is the nucleolus. Required during maturation of the 40S ribosomal subunit in the nucleolus. This is Pre-rRNA-processing protein TSR1 homolog from Drosophila melanogaster (Fruit fly).